The primary structure comprises 334 residues: Phospholipase A1 1 (334 aa).

An N-terminal signal peptide occupies residues 1–23 (MMNLKYLLFFCLVQALHYCYAYG). The propeptide occupies 24 to 33 (DPSLSNELDR). Cysteine 37 and cysteine 120 are oxidised to a cystine. Serine 170 acts as the Nucleophile in catalysis. Aspartate 198 acts as the Charge relay system in catalysis. Disulfide bonds link cysteine 209-cysteine 214 and cysteine 252-cysteine 261. Histidine 263 serves as the catalytic Charge relay system. Intrachain disulfides connect cysteine 278–cysteine 302, cysteine 279–cysteine 327, and cysteine 295–cysteine 300.

It belongs to the AB hydrolase superfamily. Lipase family. In terms of processing, not glycosylated. As to expression, expressed by the venom gland.

It is found in the secreted. It carries out the reaction a 1,2-diacyl-sn-glycero-3-phosphocholine + H2O = a 2-acyl-sn-glycero-3-phosphocholine + a fatty acid + H(+). Its function is as follows. Catalyzes the hydrolysis of phosphatidylcholine with phospholipase A1 activity (3.6 U/ml). May act as an allergen and induce hemolytic activity. In vivo, a mixture of this protein and Ves a 1.02 is able to paralyze crickets. This is Phospholipase A1 1 from Vespa affinis (Lesser banded hornet).